Reading from the N-terminus, the 164-residue chain is Putative pre-16S rRNA nuclease (164 aa).

Belongs to the YqgF nuclease family.

The protein localises to the cytoplasm. Its function is as follows. Could be a nuclease involved in processing of the 5'-end of pre-16S rRNA. The chain is Putative pre-16S rRNA nuclease from Caulobacter sp. (strain K31).